The primary structure comprises 466 residues: Nitric oxide reductase subunit B (466 aa).

Residues 19–39 traverse the membrane as a helical segment; sequence YFVFALILFVGQILFGLIMGL. A heme b-binding site is contributed by H60. Helical transmembrane passes span 61–81, 95–115, 142–162, 169–189, 205–225, 243–263, 270–290, and 308–328; these read TNLL…YLVP, WILF…YLLV, ISKA…GMTV, AISM…LFSF, VVHL…LAFV, VIIA…YFWI, LWLG…MVLF, and VALW…VWGF. Residues H207, H258, and H259 each contribute to the Fe cation site. Heme b-binding residues include H348 and H350. The next 3 helical transmembrane spans lie at 349–369, 391–411, and 434–454; these read GHMA…SYAM, FWLM…AGVL, and LAIF…GLVA.

This sequence belongs to the heme-copper respiratory oxidase family. In terms of assembly, heterodimer of cytochromes b (large subunit) and c (small subunit).

Its subcellular location is the cell membrane. The catalysed reaction is nitrous oxide + 2 Fe(III)-[cytochrome c] + H2O = 2 nitric oxide + 2 Fe(II)-[cytochrome c] + 2 H(+). It participates in nitrogen metabolism; nitrate reduction (denitrification); dinitrogen from nitrate: step 3/4. Functionally, component of the anaerobic respiratory chain that transforms nitrate to dinitrogen (denitrification). NorB is the catalytic subunit of the enzyme complex. Shows proton pump activity across the membrane in denitrifying bacterial cells. The mononitrogen reduction is probably coupled to electron transport phosphorylation. The chain is Nitric oxide reductase subunit B (norB) from Pseudomonas aeruginosa (strain ATCC 15692 / DSM 22644 / CIP 104116 / JCM 14847 / LMG 12228 / 1C / PRS 101 / PAO1).